The sequence spans 1319 residues: Uromodulin-like 1 (1319 aa).

Residues 1–22 form the signal peptide; it reads MMSRTVRLVLLALACTVDLSQA. Residues 23 to 1273 are Extracellular-facing; it reads SGFTENGLSL…CTKPVLGTGY (1251 aa). Positions 34–107 constitute an EMI domain; sequence SYQLCSYPVT…FEQLGLYCVL (74 aa). 3 disulfides stabilise this stretch: C38-C95, C62-C71, and C94-C105. N90 is a glycosylation site (N-linked (GlcNAc...) asparagine). N110 is a glycosylation site (N-linked (GlcNAc...) asparagine). The WAP domain occupies 115-159; it reads FASRPGVCPTAEAEPLSPSCSLDTDCSGLQKCCSWPGGRHCVSPT. 3 N-linked (GlcNAc...) asparagine glycosylation sites follow: N172, N193, and N243. The 42-residue stretch at 265-306 folds into the EGF-like 1; calcium-binding domain; that stretch reads DVNECLHSELQACSVREQCRNLEGSYQCVSSQRLNHTDEDCP. 2 cysteine pairs are disulfide-bonded: C269-C283 and C277-C292. Residues 307–391 form the Fibronectin type-III 1 domain; the sequence is PIRDFVALNV…ATLVVKTDAQ (85 aa). Residue N315 is glycosylated (N-linked (GlcNAc...) asparagine). The SEA 1 domain occupies 389–503; the sequence is DAQVFQVTIR…QRTFVQDWDE (115 aa). An EGF-like 2; calcium-binding domain is found at 500–545; that stretch reads DWDECAHSSEHDCHPSARCINLEGSYTCQCLTARDASPSRAGRVCE. 3 cysteine pairs are disulfide-bonded: C504–C518, C512–C527, and C529–C544. Disordered regions lie at residues 569-649 and 664-703; these read TGIT…ITKD and HSSP…PESP. The span at 619–632 shows a compositional bias: low complexity; it reads TGQGQTHGTHQGTT. Over residues 638–647 the composition is skewed to basic and acidic residues; it reads TTRESQELIT. Positions 664 to 678 are enriched in polar residues; sequence HSSPTWKTPPNSTRL. Residues 709 to 795 form the Fibronectin type-III 2 domain; the sequence is PIGKVTVSNV…QLKVRTVAQK (87 aa). N-linked (GlcNAc...) asparagine glycosylation is found at N717 and N757. In terms of domain architecture, SEA 2 spans 792 to 904; that stretch reads VAQKLAGNVR…GKTFMQDYNE (113 aa). The EGF-like 3; calcium-binding domain occupies 901 to 945; sequence DYNECDMKEDDCAPGTCRNTFGSFTCSCDEGGPDSQVEYSGRSCD. 3 cysteine pairs are disulfide-bonded: C905–C917, C912–C926, and C928–C944. Residues 939–966 are disordered; sequence YSGRSCDGDPSGNMTQTPGSEWSPTPAG. Polar residues predominate over residues 950 to 961; it reads GNMTQTPGSEWS. N951 carries N-linked (GlcNAc...) asparagine glycosylation. The ZP domain occupies 995 to 1238; the sequence is SCEIETVIIT…NSCRISCNDF (244 aa). C1160 and C1218 form a disulfide bridge. A helical transmembrane segment spans residues 1274–1294; the sequence is IILLAAAALLVVAGATTLLIL. Over 1295–1319 the chain is Cytoplasmic; that stretch reads RYQRVRQKYNLRIQTDDFSYQVFSQ.

It is found in the cell membrane. The polypeptide is Uromodulin-like 1 (Umodl1) (Mus musculus (Mouse)).